The sequence spans 182 residues: ATP synthase subunit delta (182 aa).

Belongs to the ATPase delta chain family. As to quaternary structure, F-type ATPases have 2 components, F(1) - the catalytic core - and F(0) - the membrane proton channel. F(1) has five subunits: alpha(3), beta(3), gamma(1), delta(1), epsilon(1). CF(0) has four main subunits: a(1), b(1), b'(1) and c(10-14). The alpha and beta chains form an alternating ring which encloses part of the gamma chain. F(1) is attached to F(0) by a central stalk formed by the gamma and epsilon chains, while a peripheral stalk is formed by the delta, b and b' chains.

Its subcellular location is the cellular thylakoid membrane. Functionally, f(1)F(0) ATP synthase produces ATP from ADP in the presence of a proton or sodium gradient. F-type ATPases consist of two structural domains, F(1) containing the extramembraneous catalytic core and F(0) containing the membrane proton channel, linked together by a central stalk and a peripheral stalk. During catalysis, ATP synthesis in the catalytic domain of F(1) is coupled via a rotary mechanism of the central stalk subunits to proton translocation. Its function is as follows. This protein is part of the stalk that links CF(0) to CF(1). It either transmits conformational changes from CF(0) to CF(1) or is implicated in proton conduction. This chain is ATP synthase subunit delta, found in Parasynechococcus marenigrum (strain WH8102).